Here is a 244-residue protein sequence, read N- to C-terminus: uncharacterized protein (244 aa).

Basic residues predominate over residues 1-11 (MSRRSRSRSRS). 2 disordered regions span residues 1-104 (MSRR…TLNE) and 213-244 (ARQK…KFGK). A compositionally biased stretch (basic and acidic residues) spans 12 to 31 (PKRDREERKRREDRDRDRER). Basic residues predominate over residues 32–46 (KRDRKDRERKRRHRS). Residues 63–75 (FREERRRRERNES) are compositionally biased toward basic and acidic residues. Residues 77–89 (KLPPPPPPPPSDP) show a composition bias toward pro residues. The span at 213 to 223 (ARQKSDMKKNE) shows a compositional bias: basic and acidic residues. Positions 224-234 (QQAILNKSGNS) are enriched in polar residues.

This is an uncharacterized protein from Caenorhabditis elegans.